Reading from the N-terminus, the 474-residue chain is tRNA-2-methylthio-N(6)-dimethylallyladenosine synthase (474 aa).

The MTTase N-terminal domain maps to 3–120 (KKLYIKTFGC…LPQMISTRQI (118 aa)). [4Fe-4S] cluster contacts are provided by Cys-12, Cys-49, Cys-83, Cys-157, Cys-161, and Cys-164. Residues 143–382 (RTEGVTAFVS…ELQAQAISVR (240 aa)) enclose the Radical SAM core domain. Residues 381 to 444 (VRMVGTTQRV…SHTLRGENVR (64 aa)) enclose the TRAM domain.

It belongs to the methylthiotransferase family. MiaB subfamily. In terms of assembly, monomer. It depends on [4Fe-4S] cluster as a cofactor.

The protein resides in the cytoplasm. The enzyme catalyses N(6)-dimethylallyladenosine(37) in tRNA + (sulfur carrier)-SH + AH2 + 2 S-adenosyl-L-methionine = 2-methylsulfanyl-N(6)-dimethylallyladenosine(37) in tRNA + (sulfur carrier)-H + 5'-deoxyadenosine + L-methionine + A + S-adenosyl-L-homocysteine + 2 H(+). Functionally, catalyzes the methylthiolation of N6-(dimethylallyl)adenosine (i(6)A), leading to the formation of 2-methylthio-N6-(dimethylallyl)adenosine (ms(2)i(6)A) at position 37 in tRNAs that read codons beginning with uridine. In Nitrosospira multiformis (strain ATCC 25196 / NCIMB 11849 / C 71), this protein is tRNA-2-methylthio-N(6)-dimethylallyladenosine synthase.